The sequence spans 924 residues: Phosphatidate phosphatase LPIN1 (924 aa).

Residues 1 to 108 (MNYVGQLAGQ…IPMYLATSPI (108 aa)) are N-LIP. Phosphoserine is present on residues Ser106 and Ser150. 2 disordered regions span residues 133–248 (PTTA…DCQR) and 269–297 (FHAS…ADRL). The segment covering 152–161 (GKKRRKRRRK) has biased composition (basic residues). The Nuclear localization signal signature appears at 153 to 158 (KKRRKR). A compositionally biased stretch (basic and acidic residues) spans 162–172 (AQLDNLKRDDN). Positions 176 to 193 (SEDEDMFPIEMSSDEDTA) are enriched in acidic residues. Polar residues-rich tracts occupy residues 218 to 229 (PSISTHPQSASY) and 273 to 284 (ESPSGSRPSTPK). Residues Ser285, Ser287, and Ser293 each carry the phosphoserine modification. A compositionally biased stretch (basic and acidic residues) spans 285 to 297 (SDSELVSKSADRL). Thr298 bears the Phosphothreonine mark. Disordered stretches follow at residues 314-426 (QAAK…SRHL) and 446-490 (LYFP…STSD). Ser328 is subject to Phosphoserine. Positions 343–358 (AIHSESSDTFSDQSPT) are enriched in polar residues. Phosphoserine is present on Ser392. The span at 404–413 (NTAQSSSKTD) shows a compositional bias: polar residues. N6-acetyllysine is present on Lys459. Residues 461 to 476 (ASDNGARSANQSPQSV) are compositionally biased toward polar residues. A phosphoserine mark is found at Ser468, Ser472, and Ser483. Residues Lys599 and Lys629 each participate in a glycyl lysine isopeptide (Lys-Gly) (interchain with G-Cter in SUMO) cross-link. Positions 627–649 (RIKHESSSSDEEHAAAKPSGSSH) are disordered. Residues 628 to 641 (IKHESSSSDEEHAA) show a composition bias toward basic and acidic residues. Position 629 is an N6-acetyllysine (Lys629). A phosphoserine mark is found at Ser634 and Ser635. Residues 658-864 (YKKTLRLTSE…VNPKGELVQE (207 aa)) form a C-LIP region. A DXDXT motif motif is present at residues 712-716 (DIDGT). The short motif at 723-727 (LGHIL) is the LXXIL motif element. A phosphoserine mark is found at Ser921 and Ser923.

The protein belongs to the lipin family. In terms of assembly, interacts (via LXXIL motif) with PPARA. Interacts with PPARGC1A. Interaction with PPARA and PPARGC1A leads to the formation of a complex that modulates gene transcription. Interacts with MEF2C. The cofactor is Mg(2+). In terms of processing, phosphorylated at multiple sites in response to insulin. Phosphorylation is controlled by the mTOR signaling pathway. Phosphorylation is decreased by epinephrine. Phosphorylation may not directly affect the catalytic activity but may regulate the localization. Dephosphorylated by the CTDNEP1-CNEP1R1 complex. Phosphorylated at multiple sites by mTOR in response to insulin, leading to its inactivation. Phosphorylation does not affect the catalytic activity but regulates the localization. Phosphorylation is decreased by epinephrine. Dephosphorylated by the CTDNEP1-CNEP1R1 complex. Dephosphorylation following mTOR inhibition promotes its activity. Post-translationally, sumoylation is important in brain and is marginal in other tissues. Sumoylation facilitates nuclear localization of isoform 2 in neuronals cells and its transcriptional coactivator activity. In terms of processing, acetylation at Lys-459 and Lys-629 by KAT5 in response to fatty acids promotes translocation to the endoplasmic reticulum and synthesis of diacylglycerol. Specifically expressed in skeletal muscle. Also expressed prominently in adipose tissue, and testis. Lower expression also detected in kidney, lung, brain and liver. In terms of tissue distribution, predominant isoform in the liver. As to expression, predominant isoform in the brain.

The protein localises to the mitochondrion outer membrane. Its subcellular location is the cytoplasm. It is found in the nucleus membrane. It localises to the nucleus. The protein resides in the endoplasmic reticulum membrane. The catalysed reaction is a 1,2-diacyl-sn-glycero-3-phosphate + H2O = a 1,2-diacyl-sn-glycerol + phosphate. The enzyme catalyses 1-octadecanoyl-2-(4Z,7Z,10Z,13Z,16Z,19Z-docosahexaenoyl)-sn-glycero-3-phosphate + H2O = 1-octadecanoyl-2-(4Z,7Z,10Z,13Z,16Z,19Z-docosahexaenoyl)-sn-glycerol + phosphate. It carries out the reaction 1-octadecanoyl-2-(5Z,8Z,11Z,14Z-eicosatetraenoyl)-sn-glycero-3-phosphate + H2O = 1-octadecanoyl-2-(5Z,8Z,11Z,14Z-eicosatetraenoyl)-sn-glycerol + phosphate. It catalyses the reaction 1-octadecanoyl-2-(9Z,12Z-octadecadienoyl)-sn-glycero-3-phosphate + H2O = 1-octadecanoyl-2-(9Z,12Z)-octadecadienoyl-sn-glycerol + phosphate. The catalysed reaction is 1-octadecanoyl-2-(9Z-octadecenoyl)-sn-glycero-3-phosphate + H2O = 1-octadecanoyl-2-(9Z-octadecenoyl)-sn-glycerol + phosphate. The enzyme catalyses 1-hexadecanoyl-2-(4Z,7Z,10Z,13Z,16Z,19Z-docosahexaenoyl)-sn-glycero-3-phosphate + H2O = 1-hexadecanoyl-2-(4Z,7Z,10Z,13Z,16Z,19Z-docosahexaenoyl)-sn-glycerol + phosphate. It carries out the reaction 1,2-dioctadecanoyl-sn-glycero-3-phosphate + H2O = 1,2-dioctadecanoyl-sn-glycerol + phosphate. It catalyses the reaction 1-hexadecanoyl-2-(5Z,8Z,11Z,14Z-eicosatetraenoyl)-sn-glycero-3-phosphate + H2O = 1-hexadecanoyl-2-(5Z,8Z,11Z,14Z-eicosatetraenoyl)-sn-glycerol + phosphate. The catalysed reaction is 1-hexadecanoyl-2-(9Z,12Z-octadecadienoyl)-sn-glycero-3-phosphate + H2O = 1-hexadecanoyl-2-(9Z,12Z-octadecadienoyl)-sn-glycerol + phosphate. The enzyme catalyses 1-hexadecanoyl-2-(9Z-octadecenoyl)-sn-glycero-3-phosphate + H2O = 1-hexadecanoyl-2-(9Z-octadecenoyl)-sn-glycerol + phosphate. It carries out the reaction 1,2-di-(4Z,7Z,10Z,13Z,16Z,19Z-docosahexaenoyl)-sn-glycero-3-phosphate + H2O = 1,2-di-(4Z,7Z,10Z,13Z,16Z,19Z-docosahexaenoyl)-sn-glycerol + phosphate. It catalyses the reaction 1,2-di-(5Z,8Z,11Z,14Z)-eicosatetraenoyl-sn-glycero-3-phosphate + H2O = 1,2-di-(5Z,8Z,11Z,14Z)-eicosatetraenoyl-sn-glycerol + phosphate. The catalysed reaction is 1,2-di-(9Z,12Z-octadecadienoyl)-sn-glycero-3-phosphate + H2O = 1,2-di-(9Z,12Z-octadecadienoyl)-sn-glycerol + phosphate. The enzyme catalyses 1,2-di-(9Z-octadecenoyl)-sn-glycero-3-phosphate + H2O = 1,2-di-(9Z-octadecenoyl)-sn-glycerol + phosphate. It carries out the reaction 1,2-dihexadecanoyl-sn-glycero-3-phosphate + H2O = 1,2-dihexadecanoyl-sn-glycerol + phosphate. Its activity is regulated as follows. Inhibited by N-ethylmaleimide treatment. Its function is as follows. Acts as a magnesium-dependent phosphatidate phosphatase enzyme which catalyzes the conversion of phosphatidic acid to diacylglycerol during triglyceride, phosphatidylcholine and phosphatidylethanolamine biosynthesis and therefore controls the metabolism of fatty acids at different levels. Is involved in adipocyte differentiation. Also acts as nuclear transcriptional coactivator for PPARGC1A/PPARA regulatory pathway to modulate lipid metabolism gene expression. In terms of biological role, recruited at the mitochondrion outer membrane and is involved in mitochondrial fission by converting phosphatidic acid to diacylglycerol. In Mus musculus (Mouse), this protein is Phosphatidate phosphatase LPIN1 (Lpin1).